The sequence spans 202 residues: Urease accessory protein UreF (202 aa).

It belongs to the UreF family. UreD, UreF and UreG form a complex that acts as a GTP-hydrolysis-dependent molecular chaperone, activating the urease apoprotein by helping to assemble the nickel containing metallocenter of UreC. The UreE protein probably delivers the nickel.

The protein resides in the cytoplasm. Required for maturation of urease via the functional incorporation of the urease nickel metallocenter. The sequence is that of Urease accessory protein UreF from Sporosarcina pasteurii (Bacillus pasteurii).